The following is a 1141-amino-acid chain: Tetratricopeptide repeat protein 17 (1141 aa).

A TPR 1 repeat occupies 295–328 (FTSYYTLGNIYAMLGEYNHSVLCYDHALQARPGF). Residues 340-382 (CQQKLEQKLEAQHRSLQRTLNELKEYQKQHDHYLRQQEILEKH) are a coiled coil. 5 TPR repeats span residues 619-652 (WLIL…APLQ), 689-722 (PLTF…TTKC), 1014-1048 (SWVL…APHQ), 1051-1084 (DVPL…APHF), and 1085-1118 (AVNH…QPEF).

Belongs to the TTC17 family. In terms of assembly, interacts with CATIP. Expressed in germ cells as well as in somatic cells of the testis (at protein level).

The protein localises to the cytoplasm. It localises to the cell membrane. The protein resides in the cytoskeleton. Its function is as follows. Plays a role in primary ciliogenesis by modulating actin polymerization. The polypeptide is Tetratricopeptide repeat protein 17 (TTC17) (Homo sapiens (Human)).